A 405-amino-acid polypeptide reads, in one-letter code: L-cysteine:1D-myo-inositol 2-amino-2-deoxy-alpha-D-glucopyranoside ligase (405 aa).

Cys43 serves as a coordination point for Zn(2+). Residues 43-46 (CGIT), Thr58, and 81-83 (NIT) contribute to the L-cysteinyl-5'-AMP site. The 'HIGH' region signature appears at 45–55 (ITPYDATHLGH). Positions 187–192 (ERGGDP) match the 'ERGGDP' region motif. Trp227 provides a ligand contact to L-cysteinyl-5'-AMP. Zn(2+) is bound at residue Cys231. L-cysteinyl-5'-AMP is bound at residue 249-251 (GSD). Residue His256 coordinates Zn(2+). Position 283 (Ile283) interacts with L-cysteinyl-5'-AMP. Residues 289 to 293 (KMSKS) carry the 'KMSKS' region motif.

The protein belongs to the class-I aminoacyl-tRNA synthetase family. MshC subfamily. As to quaternary structure, monomer. Zn(2+) is required as a cofactor.

It carries out the reaction 1D-myo-inositol 2-amino-2-deoxy-alpha-D-glucopyranoside + L-cysteine + ATP = 1D-myo-inositol 2-(L-cysteinylamino)-2-deoxy-alpha-D-glucopyranoside + AMP + diphosphate + H(+). Functionally, catalyzes the ATP-dependent condensation of GlcN-Ins and L-cysteine to form L-Cys-GlcN-Ins. The chain is L-cysteine:1D-myo-inositol 2-amino-2-deoxy-alpha-D-glucopyranoside ligase from Nakamurella multipartita (strain ATCC 700099 / DSM 44233 / CIP 104796 / JCM 9543 / NBRC 105858 / Y-104) (Microsphaera multipartita).